A 528-amino-acid polypeptide reads, in one-letter code: UDP-glucuronosyltransferase 2B30 (528 aa).

The first 23 residues, 1–23, serve as a signal peptide directing secretion; that stretch reads MSMKWTSALLLIQLSCYLSSGNC. The residue at position 135 (Lys135) is an N6-succinyllysine. An N-linked (GlcNAc...) asparagine glycan is attached at Asn315. Residues 493–513 traverse the membrane as a helical segment; it reads VIGFLLACVATVIFIITKCLF.

This sequence belongs to the UDP-glycosyltransferase family. In terms of tissue distribution, expressed in several tissues, including prostate, testis, mammary gland, kidney, adrenals and intestine.

It is found in the microsome membrane. Its subcellular location is the endoplasmic reticulum membrane. The enzyme catalyses glucuronate acceptor + UDP-alpha-D-glucuronate = acceptor beta-D-glucuronoside + UDP + H(+). UDPGTs are of major importance in the conjugation and subsequent elimination of potentially toxic xenobiotics and endogenous compounds. This isozyme has glucuronidating capacity on testosterone, dihydrotestosterone, 5-alpha-androstane-3-alpha,17-beta-diol, androsterone, oestradiol, tetrahydroaldosterone and tetrahydrocortisone. This enzyme is essential to inactivation of several steroids. The protein is UDP-glucuronosyltransferase 2B30 (UGT2B30) of Macaca fascicularis (Crab-eating macaque).